The primary structure comprises 448 residues: Probable D-serine dehydratase (448 aa).

Lys-119 is modified (N6-(pyridoxal phosphate)lysine).

It belongs to the serine/threonine dehydratase family. DsdA subfamily. Pyridoxal 5'-phosphate is required as a cofactor.

It catalyses the reaction D-serine = pyruvate + NH4(+). This is Probable D-serine dehydratase from Pseudomonas paraeruginosa (strain DSM 24068 / PA7) (Pseudomonas aeruginosa (strain PA7)).